The chain runs to 234 residues: 1-(5-phosphoribosyl)-5-[(5-phosphoribosylamino)methylideneamino] imidazole-4-carboxamide isomerase (234 aa).

The Proton acceptor role is filled by D9. Catalysis depends on D131, which acts as the Proton donor.

The protein belongs to the HisA/HisF family.

It is found in the cytoplasm. The enzyme catalyses 1-(5-phospho-beta-D-ribosyl)-5-[(5-phospho-beta-D-ribosylamino)methylideneamino]imidazole-4-carboxamide = 5-[(5-phospho-1-deoxy-D-ribulos-1-ylimino)methylamino]-1-(5-phospho-beta-D-ribosyl)imidazole-4-carboxamide. The protein operates within amino-acid biosynthesis; L-histidine biosynthesis; L-histidine from 5-phospho-alpha-D-ribose 1-diphosphate: step 4/9. This is 1-(5-phosphoribosyl)-5-[(5-phosphoribosylamino)methylideneamino] imidazole-4-carboxamide isomerase from Staphylococcus epidermidis (strain ATCC 12228 / FDA PCI 1200).